Reading from the N-terminus, the 484-residue chain is Chromosomal replication initiator protein DnaA (484 aa).

The domain I, interacts with DnaA modulators stretch occupies residues 1–74 (MEKSKNIWSL…ILTKNGYNNV (74 aa)). Positions 74-139 (VTIVFTNQPP…EEEPTNFKNP (66 aa)) are domain II. A domain III, AAA+ region region spans residues 140–356 (FLKKRYTFEN…AAVTKLKAYI (217 aa)). Residues Gly184, Gly186, Lys187, and Thr188 each contribute to the ATP site. The segment at 357-484 (DLDNIEIDID…TELMNKIKKN (128 aa)) is domain IV, binds dsDNA.

It belongs to the DnaA family. In terms of assembly, oligomerizes as a right-handed, spiral filament on DNA at oriC.

It is found in the cytoplasm. Its function is as follows. Plays an essential role in the initiation and regulation of chromosomal replication. ATP-DnaA binds to the origin of replication (oriC) to initiate formation of the DNA replication initiation complex once per cell cycle. Binds the DnaA box (a 9 base pair repeat at the origin) and separates the double-stranded (ds)DNA. Forms a right-handed helical filament on oriC DNA; dsDNA binds to the exterior of the filament while single-stranded (ss)DNA is stabiized in the filament's interior. The ATP-DnaA-oriC complex binds and stabilizes one strand of the AT-rich DNA unwinding element (DUE), permitting loading of DNA polymerase. After initiation quickly degrades to an ADP-DnaA complex that is not apt for DNA replication. Binds acidic phospholipids. The chain is Chromosomal replication initiator protein DnaA from Borrelia garinii subsp. bavariensis (strain ATCC BAA-2496 / DSM 23469 / PBi) (Borreliella bavariensis).